The chain runs to 446 residues: Enolase 1 (446 aa).

Positions 164 and 173 each coordinate substrate. E216 (proton donor) is an active-site residue. Residues D251, E302, and D329 each contribute to the Mg(2+) site. 2 residues coordinate substrate: E302 and D329. Residue K354 is the Proton acceptor of the active site. Substrate-binding positions include 381–384 (SHRS) and K405.

It belongs to the enolase family. Homodimer. It depends on Mg(2+) as a cofactor.

The protein localises to the cytoplasm. It carries out the reaction (2R)-2-phosphoglycerate = phosphoenolpyruvate + H2O. It functions in the pathway carbohydrate degradation; glycolysis; pyruvate from D-glyceraldehyde 3-phosphate: step 4/5. The sequence is that of Enolase 1 (ENO1) from Zea mays (Maize).